Consider the following 289-residue polypeptide: Phospholipase A1 (289 aa).

The first 20 residues, methionine 1–alanine 20, serve as a signal peptide directing secretion. Residues glutamine 21–leucine 52 are Periplasmic-facing. Residues tyrosine 53 to threonine 65 form a beta stranded membrane-spanning segment. Topologically, residues serine 66 to lysine 84 are extracellular. Residues aspartate 85–arginine 99 traverse the membrane as a beta stranded segment. The Periplasmic segment spans residues glycine 100–asparagine 105. A beta stranded transmembrane segment spans residues serine 106–tryptophan 118. Over glutamine 119–proline 128 the chain is Extracellular. Serine 126 is a Ca(2+) binding site. The beta stranded transmembrane segment at phenylalanine 129–valine 148 threads the bilayer. At glycine 149–aspartate 150 the chain is on the periplasmic side. The beta stranded transmembrane segment at tryptophan 151 to serine 164 threads the bilayer. Residue histidine 162 is the Proton acceptor of the active site. Serine 164 acts as the Nucleophile in catalysis. Over asparagine 165 to arginine 173 the chain is Extracellular. Residues arginine 167 and serine 172 each contribute to the Ca(2+) site. A beta stranded membrane pass occupies residues serine 174 to asparagine 186. Residues glycine 187–asparagine 188 lie on the Periplasmic side of the membrane. A beta stranded membrane pass occupies residues tryptophan 189 to valine 198. The Extracellular portion of the chain corresponds to isoleucine 199–glutamine 216. Aspartate 204 is a Ca(2+) binding site. Residues leucine 217 to leucine 223 form a beta stranded membrane-spanning segment. Topologically, residues glycine 224 to glutamate 225 are periplasmic. Residues alanine 226–tyrosine 234 traverse the membrane as a beta stranded segment. Topologically, residues asparagine 235–glycine 241 are extracellular. Residues glycine 242–proline 250 form a beta stranded membrane-spanning segment. Residues isoleucine 251–valine 255 lie on the Periplasmic side of the membrane. A beta stranded transmembrane segment spans residues arginine 256–tyrosine 265. At glycine 266–phenylalanine 274 the chain is on the extracellular side. A beta stranded transmembrane segment spans residues asparagine 275–asparagine 286. Residues aspartate 287 to phenylalanine 289 are Periplasmic-facing.

It belongs to the phospholipase A1 family. Homodimer; dimerization is reversible, and the dimeric form is the active one. The cofactor is Ca(2+).

It is found in the cell outer membrane. The enzyme catalyses a 1,2-diacyl-sn-glycero-3-phosphocholine + H2O = a 2-acyl-sn-glycero-3-phosphocholine + a fatty acid + H(+). It carries out the reaction a 1,2-diacyl-sn-glycero-3-phosphocholine + H2O = a 1-acyl-sn-glycero-3-phosphocholine + a fatty acid + H(+). Functionally, hydrolysis of phosphatidylcholine with phospholipase A2 (EC 3.1.1.4) and phospholipase A1 (EC 3.1.1.32) activities. The chain is Phospholipase A1 (pldA) from Proteus vulgaris.